A 272-amino-acid chain; its full sequence is UPF0759 protein YecE (272 aa).

Belongs to the UPF0759 family.

The polypeptide is UPF0759 protein YecE (yecE) (Escherichia coli (strain K12)).